Here is a 2388-residue protein sequence, read N- to C-terminus: CCR4-NOT transcription complex subunit 1 (2388 aa).

4 consecutive short sequence motifs (LXXLL) follow at residues 153–157 (LPDLL), 181–185 (LHLLL), 223–227 (LAPLL), and 570–574 (LSMLL). 2 disordered regions span residues 1012–1035 (SQAQ…TTPA) and 1300–1320 (EQLS…PMTS). Over residues 1016–1035 (TPAKPASSSAVTTPTTTTPA) the composition is skewed to low complexity. The interval 1076–1617 (EPPENVQEKI…QPMKQQAWAT (542 aa)) is interaction with CCR4-NOT complex catalytic subunits. Residues 1300 to 1313 (EQLSAPKKDVKQPE) are compositionally biased toward basic and acidic residues. 3 short sequence motifs (LXXLL) span residues 1651–1655 (LRSLL), 1954–1958 (LIALL), and 2108–2112 (LRVLL).

It belongs to the CNOT1 family. As to quaternary structure, component of the CCR4-NOT complex.

It is found in the cytoplasm. The protein resides in the nucleus. Its function is as follows. Scaffolding component of the CCR4-NOT complex which is one of the major cellular mRNA deadenylases and is linked to various cellular processes including bulk mRNA degradation, miRNA-mediated repression, translational repression during translational initiation and general transcription regulation. Additional complex functions may be a consequence of its influence on mRNA expression. Its scaffolding function implies its interaction with the catalytic complex module and diverse RNA-binding proteins mediating the complex recruitment to selected mRNA 3'UTRs. Acts as a transcriptional repressor. Represses the ligand-dependent transcriptional activation by nuclear receptors. The polypeptide is CCR4-NOT transcription complex subunit 1 (cnot1) (Xenopus tropicalis (Western clawed frog)).